We begin with the raw amino-acid sequence, 1165 residues long: Activity-dependent neuroprotector homeobox protein 2 (1165 aa).

The segment at 73–96 adopts a C2H2-type 1 zinc-finger fold; it reads YCCSLCRYSTKVLTSLKNHLHRYH. The C2H2-type 2; degenerate zinc finger occupies 106-128; the sequence is IPCPNCPFSSQPRVVGKHFRMFH. A Glycyl lysine isopeptide (Lys-Gly) (interchain with G-Cter in SUMO2) cross-link involves residue lysine 146. The C2H2-type 3; degenerate zinc finger occupies 155-178; sequence FTCLKCNFSNTLYYSMKKHVLVAH. Residues 215–240 form a C2H2-type 4 zinc finger; sequence YYCKKCSAIASSQDALMYHILTSDAH. The segment covering 303 to 318 has biased composition (low complexity); it reads SGTVQSVTVTPGTSGS. Residues 303 to 327 form a disordered region; the sequence is SGTVQSVTVTPGTSGSLTHSPPTTA. The C2H2-type 5; degenerate zinc-finger motif lies at 696-718; that stretch reads KTCPVCNELFPSNVYQVHMEVAH. Residues 724-746 form a C2H2-type 6; degenerate zinc finger; it reads QLCQVCNELFPANVYQVHMEVAH. The segment at 777-798 adopts a C2H2-type 7; degenerate zinc-finger fold; the sequence is VRCLSCKCLVSQEELMHHLLMH. 2 consecutive C2H2-type zinc fingers follow at residues 800–823 and 905–935; these read LGCL…RTKH and LTCP…PTVH. A disordered region spans residues 1005–1068; that stretch reads PVKRKLPEGH…SGPSEDSLQA (64 aa). Glycyl lysine isopeptide (Lys-Gly) (interchain with G-Cter in SUMO2) cross-links involve residues lysine 1009 and lysine 1048. The segment covering 1009-1024 has biased composition (basic and acidic residues); sequence KLPEGHLGPEDQRDGE. The homeobox DNA-binding region spans 1090-1132; it reads DYFHRRPYPSRKEVELLSSLLWVWKIDVASFFGKRRYICMKAI.

Belongs to the krueppel C2H2-type zinc-finger protein family. In terms of assembly, may interact with SMARCA4/BRG1. In terms of tissue distribution, expressed widely, with the highest level in the brain.

It localises to the nucleus. Functionally, may be involved in transcriptional regulation. May play a role in neuronal function; perhaps involved in protection of brain tissues from oxidative stress. May be involved in erythroid differentiation. This chain is Activity-dependent neuroprotector homeobox protein 2 (Adnp2), found in Mus musculus (Mouse).